Reading from the N-terminus, the 269-residue chain is Endo-1,3-1,4-beta-glycanase ExoK (269 aa).

The signal sequence occupies residues M1–A29. A GH16 domain is found at D40–E252. The active-site Nucleophile is E138. The active-site Proton donor is E142.

This sequence belongs to the glycosyl hydrolase 16 family.

It localises to the secreted. It participates in glycan metabolism; exopolysaccharide biosynthesis. Cleaves high molecular weight succinoglycan to yield LMW succinoglycan. Dynamically regulates the molecular weight distribution of succinoglycan by cleaving nascent succinoglycan only during a limited period after its synthesis, perhaps before it undergoes a time-dependent change in its conformation or aggregation state. This Rhizobium meliloti (strain 1021) (Ensifer meliloti) protein is Endo-1,3-1,4-beta-glycanase ExoK (exoK).